The sequence spans 1057 residues: Adenylate-forming reductase stbB (1057 aa).

The adenylation (A) domain stretch occupies residues 21-378; that stretch reads STKRQPGAVC…FRLRTDMNFE (358 aa). AMP contacts are provided by residues His-251, 344-345, Thr-349, and 423-426; these read NF and AVGR. Positions 564 to 651 constitute a Carrier domain; that stretch reads ETLEEDIKAL…QMAAAIKNPS (88 aa). The residue at position 600 (Ser-600) is an O-(pantetheine 4'-phosphoryl)serine. Positions 693–1025 are reductase (R) domain; that stretch reads IVVVTGSSGS…SGAVILGTDV (333 aa). Residues 700 to 703, 783 to 785, Tyr-858, and Lys-862 each bind NADP(+); these read SGSL and AAW.

The protein belongs to the adenylate-forming reductase family.

The enzyme catalyses ilicicolinate B + AH2 + ATP = ilicicolin B + A + AMP + diphosphate. It functions in the pathway secondary metabolite biosynthesis; terpenoid biosynthesis. Its function is as follows. Nonribosomal peptide synthase-like protein; part of the cluster that mediates the biosynthesis of LL-Z1272-beta, also known as ilicicolin B, a prenylated aryl-aldehyde produced by several fungi and that serves as a key pathway intermediate for many fungal meroterpenoids. The first step in the pathway is performed by the non-reducing polyketide synthase stbA that produces orsellinic acid by condensing acetyl-CoA with 3 malonyl-CoA units. The prenyltransferase stbC then prenylates orsenilic acid into grifolic acid. Finally, grifolic acid is reduced to ilicicolin B by the NRPS-like protein stbB. The protein is Adenylate-forming reductase stbB of Stachybotrys bisbyi (Hyalostachybotrys bisbyi).